The sequence spans 630 residues: MKSSQRRIKRHAMRDMSISTLLLSVVLLPSVVSANDHVYFNPPSPGSPFLGPQIPLTGPPSLTNEHEFTLRHIYERGTNDQPDLHRRLDIKPHTRLWAVSDDGLEKELVTFDTPLVASSSPLTIQRLADRRPSVIEGYLTAARYNGEAVALSSSDWVMDTLAGPDVTKKETVLTFAKMTANDYIEEPGTEDWNYIHGRFNYSSSFGWQSDGLRGHIYADTKNNTIVISLKGTSPALFDGAGTTTNDKINDNLFFSCCCGQGGSYLWRQVCDCQQSAFTANLTCIAEAMNDENKYYRAAIDLYTNVTDMYPDANVWMTGHSLGGAMSSLLGLTFGLPVVTFEAVPEALPAARLGLPSPPGHDPRLPQTRKYTGTYHFGHTADPVYMGTCNGVGSICTWGGYAMESACHTGQMCVYDTVEDKGWRVALSTHRIKAVISDVLEVYDNVPPCAAEEECYDCELWKFFRSNGSETTTTSRTSTTTTPTTTRTLTCETPGWWGCLDESTTTTATTATSTTTTTSTCKTPGWFGCKDSTTTVDATAAPTVTTTIATPTTFPISSTTCKDPGWFGCRDPSSTTASVTAPPFSTSTSSDHVRADHSIGDGAAHPLTRMYLERLRQVEFAWGSDIEHYEI.

At 1–20 (MKSSQRRIKRHAMRDMSIST) the chain is on the cytoplasmic side. A helical; Signal-anchor for type II membrane protein transmembrane segment spans residues 21 to 40 (LLLSVVLLPSVVSANDHVYF). At 41–630 (NPPSPGSPFL…WGSDIEHYEI (590 aa)) the chain is on the lumenal side. Residues Asn200, Asn222, Asn280, and Asn304 are each glycosylated (N-linked (GlcNAc...) asparagine). Ser320 (charge relay system) is an active-site residue. A glycan (N-linked (GlcNAc...) asparagine) is linked at Asn466. A compositionally biased stretch (polar residues) spans 577-589 (SVTAPPFSTSTSS). Positions 577–599 (SVTAPPFSTSTSSDHVRADHSIG) are disordered.

This sequence belongs to the AB hydrolase superfamily. Lipase family. Binds to both phosphatidylinositol (PI) and phosphatidylinositol 3,5-bisphosphate (PIP2).

The protein localises to the endosome. It is found in the multivesicular body membrane. Its subcellular location is the prevacuolar compartment membrane. The enzyme catalyses a triacylglycerol + H2O = a diacylglycerol + a fatty acid + H(+). Its function is as follows. Lipase which is essential for lysis of subvacuolar cytoplasm to vacuole targeted bodies and intravacuolar autophagic bodies. Involved in the lysis of intravacuolar multivesicular body (MVB) vesicles. The intravacuolar membrane disintegration by atg15 is critical to life span extension. The sequence is that of Putative lipase atg15 (atg15) from Aspergillus clavatus (strain ATCC 1007 / CBS 513.65 / DSM 816 / NCTC 3887 / NRRL 1 / QM 1276 / 107).